The primary structure comprises 194 residues: CASP-like protein 2D1 (194 aa).

The segment covering methionine 1–serine 16 has biased composition (basic and acidic residues). Residues methionine 1–proline 26 form a disordered region. Over methionine 1–lysine 30 the chain is Cytoplasmic. The chain crosses the membrane as a helical span at residues isoleucine 31–threonine 51. Over valine 52–tyrosine 74 the chain is Extracellular. The helical transmembrane segment at methionine 75–valine 95 threads the bilayer. The Cytoplasmic portion of the chain corresponds to threonine 96 to glutamine 110. Residues valine 111 to glycine 133 form a helical membrane-spanning segment. Residues aspartate 134–lysine 152 lie on the Extracellular side of the membrane. Residues leucine 153 to isoleucine 173 traverse the membrane as a helical segment. At serine 174–alanine 194 the chain is on the cytoplasmic side.

Belongs to the Casparian strip membrane proteins (CASP) family. Homodimer and heterodimers.

Its subcellular location is the cell membrane. The sequence is that of CASP-like protein 2D1 from Arabidopsis thaliana (Mouse-ear cress).